Here is a 510-residue protein sequence, read N- to C-terminus: Beta-glucosidase 34 (510 aa).

Positions 1–26 (MGNGGRCMVEVVILLVLMAMSQGCDA) are cleaved as a signal peptide. A glycan (N-linked (GlcNAc...) asparagine) is linked at Asn-28. Gln-52 lines the a beta-D-glucoside pocket. An N-linked (GlcNAc...) asparagine glycan is attached at Asn-120. A beta-D-glucoside-binding positions include His-153 and 198-199 (NE). The active-site Proton donor is Glu-199. The cysteines at positions 218 and 226 are disulfide-linked. N-linked (GlcNAc...) asparagine glycans are attached at residues Asn-279 and Asn-331. Tyr-342 serves as a coordination point for a beta-D-glucoside. N-linked (GlcNAc...) asparagine glycosylation is present at Asn-360. A beta-D-glucoside-binding positions include Glu-415, Trp-465, 472–473 (EW), and Phe-481. Glu-415 serves as the catalytic Nucleophile.

The protein belongs to the glycosyl hydrolase 1 family.

It carries out the reaction Hydrolysis of terminal, non-reducing beta-D-glucosyl residues with release of beta-D-glucose.. The sequence is that of Beta-glucosidase 34 (BGLU34) from Oryza sativa subsp. japonica (Rice).